We begin with the raw amino-acid sequence, 595 residues long: Proline--tRNA ligase (595 aa).

The tract at residues 1-22 (MKMSTMFGATLHTAPGRSESEG) is disordered.

It belongs to the class-II aminoacyl-tRNA synthetase family. ProS type 1 subfamily. Homodimer.

It localises to the cytoplasm. It carries out the reaction tRNA(Pro) + L-proline + ATP = L-prolyl-tRNA(Pro) + AMP + diphosphate. Functionally, catalyzes the attachment of proline to tRNA(Pro) in a two-step reaction: proline is first activated by ATP to form Pro-AMP and then transferred to the acceptor end of tRNA(Pro). As ProRS can inadvertently accommodate and process non-cognate amino acids such as alanine and cysteine, to avoid such errors it has two additional distinct editing activities against alanine. One activity is designated as 'pretransfer' editing and involves the tRNA(Pro)-independent hydrolysis of activated Ala-AMP. The other activity is designated 'posttransfer' editing and involves deacylation of mischarged Ala-tRNA(Pro). The misacylated Cys-tRNA(Pro) is not edited by ProRS. The polypeptide is Proline--tRNA ligase (Salinispora tropica (strain ATCC BAA-916 / DSM 44818 / JCM 13857 / NBRC 105044 / CNB-440)).